Reading from the N-terminus, the 134-residue chain is Syncollin (134 aa).

The signal sequence occupies residues 1-21 (MSPLRPLLLALALASVPCAQG).

In terms of assembly, monomer and homooligomer; most probably hexameric. Interacts with GP2. Post-translationally, contains intrachain disulfide bonds.

Its subcellular location is the zymogen granule membrane. The protein resides in the zymogen granule lumen. In terms of biological role, functions in exocytosis in pancreatic acinar cells regulating the fusion of zymogen granules with each other. May have a pore-forming activity on membranes and regulate exocytosis in other exocrine tissues. This Homo sapiens (Human) protein is Syncollin (SYCN).